The primary structure comprises 215 residues: 3,4-dihydroxy-2-butanone 4-phosphate synthase (215 aa).

Residues 37 to 38, Asp42, 150 to 154, and Glu175 each bind D-ribulose 5-phosphate; these read RE and RRGHT. Glu38 lines the Mg(2+) pocket. His153 is a Mg(2+) binding site.

Belongs to the DHBP synthase family. As to quaternary structure, homodimer. It depends on Mg(2+) as a cofactor. The cofactor is Mn(2+).

It carries out the reaction D-ribulose 5-phosphate = (2S)-2-hydroxy-3-oxobutyl phosphate + formate + H(+). Its pathway is cofactor biosynthesis; riboflavin biosynthesis; 2-hydroxy-3-oxobutyl phosphate from D-ribulose 5-phosphate: step 1/1. Its function is as follows. Catalyzes the conversion of D-ribulose 5-phosphate to formate and 3,4-dihydroxy-2-butanone 4-phosphate. The sequence is that of 3,4-dihydroxy-2-butanone 4-phosphate synthase from Desulfatibacillum aliphaticivorans.